A 577-amino-acid polypeptide reads, in one-letter code: Arginine--tRNA ligase (577 aa).

The short motif at Pro-122–His-132 is the 'HIGH' region element.

This sequence belongs to the class-I aminoacyl-tRNA synthetase family. In terms of assembly, monomer.

Its subcellular location is the cytoplasm. It carries out the reaction tRNA(Arg) + L-arginine + ATP = L-arginyl-tRNA(Arg) + AMP + diphosphate. The protein is Arginine--tRNA ligase of Klebsiella pneumoniae subsp. pneumoniae (strain ATCC 700721 / MGH 78578).